The sequence spans 276 residues: UPF0328 protein ECU04_0100 (276 aa).

The tract at residues 1–24 (MGIIDVQRSHLTATPSKERDAPAH) is disordered.

This sequence belongs to the UPF0328 family.

The polypeptide is UPF0328 protein ECU04_0100 (Encephalitozoon cuniculi (strain GB-M1) (Microsporidian parasite)).